The sequence spans 172 residues: Ribosome maturation factor RimM (172 aa).

One can recognise a PRC barrel domain in the interval 96-168 (EGEFYYHQII…RVDVELMEGL (73 aa)).

Belongs to the RimM family. Binds ribosomal protein uS19.

The protein localises to the cytoplasm. An accessory protein needed during the final step in the assembly of 30S ribosomal subunit, possibly for assembly of the head region. Essential for efficient processing of 16S rRNA. May be needed both before and after RbfA during the maturation of 16S rRNA. It has affinity for free ribosomal 30S subunits but not for 70S ribosomes. This Streptococcus pyogenes serotype M28 (strain MGAS6180) protein is Ribosome maturation factor RimM.